Reading from the N-terminus, the 311-residue chain is DNA replication terminus site-binding protein (311 aa).

It belongs to the Tus family.

The protein localises to the cytoplasm. In terms of biological role, trans-acting protein required for termination of DNA replication. Binds to DNA replication terminator sequences (terA to terF) to prevent the passage of replication forks. The termination efficiency will be affected by the affinity of this protein for the terminator sequence. The sequence is that of DNA replication terminus site-binding protein from Yersinia pseudotuberculosis serotype I (strain IP32953).